Here is a 387-residue protein sequence, read N- to C-terminus: Probable G-protein coupled receptor 173 (387 aa).

Residues 1–40 lie on the Extracellular side of the membrane; sequence MANGNASSDGPGNPLAAVVSTTGGVMGGAPSSAVSTYVKL. Asn5 carries an N-linked (GlcNAc...) asparagine glycan. A helical transmembrane segment spans residues 41–61; it reads VLLGLIICISLVGNLVVSLLV. The Cytoplasmic segment spans residues 62-87; that stretch reads LRDRALHKAPYYFLLDLCLADTIRSA. The chain crosses the membrane as a helical span at residues 88–108; it reads VCFPFVLVSIKNGSAWTYSVL. At 109 to 111 the chain is on the extracellular side; sequence SCK. Cys110 and Cys188 are oxidised to a cystine. A helical transmembrane segment spans residues 112 to 132; that stretch reads VVAFMAVLFCFHAAFMLFCIS. The Cytoplasmic segment spans residues 133–153; the sequence is VTRYMAIAHHRFYSKRMTFWT. Residues 154 to 174 traverse the membrane as a helical segment; that stretch reads CVAVVCMVWTLSVAMAFPPVF. The Extracellular segment spans residues 175 to 202; the sequence is DVGTYKFIREEDQCIFEHRYFKANDTLG. Asn198 carries an N-linked (GlcNAc...) asparagine glycan. The chain crosses the membrane as a helical span at residues 203 to 223; the sequence is FMLMLAVLILATHVVYMKLLL. Residues 224–301 are Cytoplasmic-facing; it reads FEYKHRKMKP…FKAEKQLGRM (78 aa). A helical transmembrane segment spans residues 302–322; the sequence is FYVITLFFLVLWSPYIVACYW. At 323–335 the chain is on the extracellular side; the sequence is RVFVKACTIPHRY. Residues 336-356 traverse the membrane as a helical segment; it reads LSTTVWMSFAQAGVNPIICFF. At 357–387 the chain is on the cytoplasmic side; that stretch reads LNKDLKKGLLAHLPPCCRTPPQLPREPYCVM.

Belongs to the G-protein coupled receptor 1 family.

Its subcellular location is the cell membrane. Is a receptor for the SMIM20 derived peptides Phoenixin-14 and Phoenixin-20. It mediates the Phoenixin-14 and Phoenixin-20 augmentation of gonadotropin-releasing hormone (GNRH) signaling in the hypothalamus and pituitary gland. In the ovary, it mediates the effects of Phoenixin-14 and Phoenixin-20 induced granulosa cell proliferation during follicular growth. The chain is Probable G-protein coupled receptor 173 (gpr173) from Danio rerio (Zebrafish).